A 445-amino-acid polypeptide reads, in one-letter code: Glycine betaine monooxygenase oxygenase subunit (445 aa).

The Rieske domain occupies 73 to 180 (WLFVGMTCEI…VTHAGGFLFV (108 aa)). The [2Fe-2S] cluster site is built by Cys115, His117, Cys135, and His138. 2 residues coordinate Fe cation: His234 and His239.

This sequence belongs to the bacterial ring-hydroxylating dioxygenase alpha subunit family. In terms of assembly, homotrimer. The system is composed of an oxygenase subunit (BmoA) and a reductase subunit (BmoB). Maximal specific activity is obtained when the ratio of BmoA to BmoB is 5:1. [2Fe-2S] cluster serves as cofactor. Requires Fe cation as cofactor.

The catalysed reaction is glycine betaine + NADH + O2 + H(+) = N,N-dimethylglycine + formaldehyde + NAD(+) + H2O. With respect to regulation, activity is absolutely dependent on the presence of BmoB. Glycine betaine monooxygenase activity is significantly enhanced by Fe(2+) and severely inhibited by heavy-metal ions, including Co(2+), Mn(2+), Zn(2+), Cu(2+) and Ag(+). Severely inhibited by EDTA. Its function is as follows. Involved in degradation of glycine betaine. Part of a Rieske-type oxygenase system that catalyzes the conversion of glycine betaine (GB) to dimethylglycine (DMG). This subunit is the terminal oxygenase component of the system. Is specific for GB, and does not show any activity on choline, L-carnitine, stachydrine, dimethylglycine or sarcosine. Activity is strictly dependent on NADH. This Chromohalobacter salexigens (strain ATCC BAA-138 / DSM 3043 / CIP 106854 / NCIMB 13768 / 1H11) protein is Glycine betaine monooxygenase oxygenase subunit.